The primary structure comprises 283 residues: Glutamate racemase (283 aa).

Substrate is bound by residues 28–29 (DS) and 60–61 (YG). Cysteine 92 functions as the Proton donor/acceptor in the catalytic mechanism. Substrate is bound at residue 93 to 94 (NT). Catalysis depends on cysteine 204, which acts as the Proton donor/acceptor. 205–206 (TH) is a substrate binding site.

Belongs to the aspartate/glutamate racemases family.

It catalyses the reaction L-glutamate = D-glutamate. It participates in cell wall biogenesis; peptidoglycan biosynthesis. Functionally, provides the (R)-glutamate required for cell wall biosynthesis. This is Glutamate racemase from Salmonella choleraesuis (strain SC-B67).